The following is a 467-amino-acid chain: Asparagine--tRNA ligase (467 aa).

Belongs to the class-II aminoacyl-tRNA synthetase family. As to quaternary structure, homodimer.

The protein localises to the cytoplasm. The enzyme catalyses tRNA(Asn) + L-asparagine + ATP = L-asparaginyl-tRNA(Asn) + AMP + diphosphate + H(+). The chain is Asparagine--tRNA ligase from Bacteroides fragilis (strain YCH46).